The chain runs to 328 residues: Delta(3,5)-Delta(2,4)-dienoyl-CoA isomerase, mitochondrial (328 aa).

The N-terminal 26 residues, 1-26 (MAAGIVASRRLRDLLTRRLTASNYPG), are a transit peptide targeting the mitochondrion. Substrate contacts are provided by residues 116 to 120 (AGVDL) and Gly174. An N6-succinyllysine modification is found at Lys231. Ser268 is subject to Phosphoserine. The Microbody targeting signal motif lies at 326–328 (SKL). The residue at position 327 (Lys327) is an N6-acetyllysine.

The protein belongs to the enoyl-CoA hydratase/isomerase family. As to quaternary structure, homohexamer.

It is found in the mitochondrion. Its subcellular location is the peroxisome. The catalysed reaction is (3E,5Z)-octadienoyl-CoA = (2E,4E)-octadienoyl-CoA. The enzyme catalyses (3E,5Z,8Z,11Z,14Z)-eicosapentaenoyl-CoA = (2E,4E,8Z,11Z,14Z)-eicosapentaenoyl-CoA. The protein operates within lipid metabolism; fatty acid beta-oxidation. Its function is as follows. Isomerization of 3-trans,5-cis-dienoyl-CoA to 2-trans,4-trans-dienoyl-CoA. The sequence is that of Delta(3,5)-Delta(2,4)-dienoyl-CoA isomerase, mitochondrial (ECH1) from Pongo abelii (Sumatran orangutan).